We begin with the raw amino-acid sequence, 184 residues long: UPF0397 protein SAB2561c (184 aa).

Transmembrane regions (helical) follow at residues 11 to 31 (VVAI…VVIP), 44 to 64 (AFLA…TGLV), 77 to 97 (AWWS…WIGL), 111 to 131 (MIYF…LIAP), and 148 to 168 (QGVI…TILL).

The protein belongs to the UPF0397 family.

The protein localises to the cell membrane. The chain is UPF0397 protein SAB2561c from Staphylococcus aureus (strain bovine RF122 / ET3-1).